The sequence spans 540 residues: Acetyl-coenzyme A carboxylase carboxyl transferase subunit beta, chloroplastic (540 aa).

A disordered region spans residues 229–249 (YSDNGSSSIRTRTSTSSGSSY). Residues 233–248 (GSSSIRTRTSTSSGSS) show a composition bias toward low complexity. Residues 267 to 538 (LWVQCENCYA…TFHPLKSNKV (272 aa)) enclose the CoA carboxyltransferase N-terminal domain. The Zn(2+) site is built by C271, C274, C290, and C293. The segment at 271–293 (CENCYALNYNKLFRSKMNVCEQC) adopts a C4-type zinc-finger fold.

It belongs to the AccD/PCCB family. Acetyl-CoA carboxylase is a heterohexamer composed of biotin carboxyl carrier protein, biotin carboxylase and 2 subunits each of ACCase subunit alpha and ACCase plastid-coded subunit beta (accD). It depends on Zn(2+) as a cofactor.

The protein localises to the plastid. Its subcellular location is the chloroplast stroma. It catalyses the reaction N(6)-carboxybiotinyl-L-lysyl-[protein] + acetyl-CoA = N(6)-biotinyl-L-lysyl-[protein] + malonyl-CoA. Its pathway is lipid metabolism; malonyl-CoA biosynthesis; malonyl-CoA from acetyl-CoA: step 1/1. Component of the acetyl coenzyme A carboxylase (ACC) complex. Biotin carboxylase (BC) catalyzes the carboxylation of biotin on its carrier protein (BCCP) and then the CO(2) group is transferred by the transcarboxylase to acetyl-CoA to form malonyl-CoA. The sequence is that of Acetyl-coenzyme A carboxylase carboxyl transferase subunit beta, chloroplastic from Amborella trichopoda.